The sequence spans 313 residues: tRNA dimethylallyltransferase (313 aa).

14-21 (GPTASGKT) is an ATP binding site. Substrate is bound at residue 16 to 21 (TASGKT). Interaction with substrate tRNA regions lie at residues 39 to 42 (DSAL) and 163 to 167 (QRIGR).

It belongs to the IPP transferase family. In terms of assembly, monomer. Mg(2+) is required as a cofactor.

It carries out the reaction adenosine(37) in tRNA + dimethylallyl diphosphate = N(6)-dimethylallyladenosine(37) in tRNA + diphosphate. Functionally, catalyzes the transfer of a dimethylallyl group onto the adenine at position 37 in tRNAs that read codons beginning with uridine, leading to the formation of N6-(dimethylallyl)adenosine (i(6)A). The polypeptide is tRNA dimethylallyltransferase (Thiobacillus denitrificans (strain ATCC 25259 / T1)).